A 332-amino-acid chain; its full sequence is HTH-type transcriptional regulator RegA (332 aa).

In terms of domain architecture, HTH lacI-type spans 1–57 (MATSIKDVAREAGVSIATVSRVLNDIDVVNEDTKKKVLDAIKELGYRPNIVARSLKT). Positions 5-24 (IKDVAREAGVSIATVSRVLN) form a DNA-binding region, H-T-H motif.

Involved in the regulation of amylase production. In Clostridium saccharobutylicum, this protein is HTH-type transcriptional regulator RegA (regA).